The sequence spans 908 residues: Transcriptional repressor ILP1 (908 aa).

Disordered stretches follow at residues Met1–Gly113 and Val238–Lys277. Low complexity predominate over residues Ala25 to Ala47. Residues Met426–Glu453 are a coiled coil. Residues Glu513–Ala530 are compositionally biased toward basic and acidic residues. The segment at Glu513–Lys574 is disordered.

It belongs to the GCF family. As to quaternary structure, interacts with STIPL1/NTR1.

It localises to the nucleus. Transcriptional repressor regulating endoreduplication through control of A-type cyclins expression. Does not bind to promoter sequences (in vitro) and may act by interacting with tissue-specific transcription factors. Enhances the endocycle in endoreduplicating cells in seedlings. Required for efficient splicing. The chain is Transcriptional repressor ILP1 from Arabidopsis thaliana (Mouse-ear cress).